We begin with the raw amino-acid sequence, 411 residues long: Putative binding protein BRA0748/BS1330_II0741 (411 aa).

A signal peptide spans 1 to 25; sequence MLIRKWKAGLLAGLSILALASSADA.

The protein belongs to the bacterial solute-binding protein 1 family. In terms of assembly, the complex is composed of two ATP-binding proteins (BRA0745), two transmembrane proteins (BRA0749) and a solute-binding protein (BRA0748).

The protein localises to the periplasm. In terms of biological role, probably part of an ABC transporter complex. In Brucella suis biovar 1 (strain 1330), this protein is Putative binding protein BRA0748/BS1330_II0741.